A 95-amino-acid polypeptide reads, in one-letter code: MSLTHQDVARIAKLARINVSEAEIAATADQLNNIFGLIEKMQAVDTAGIEPMAHPQDVSLRLRDDVVTEPNRREAFQAVAPQVEKGLFLVPKVIE.

This sequence belongs to the GatC family. Heterotrimer of A, B and C subunits.

It catalyses the reaction L-glutamyl-tRNA(Gln) + L-glutamine + ATP + H2O = L-glutaminyl-tRNA(Gln) + L-glutamate + ADP + phosphate + H(+). The catalysed reaction is L-aspartyl-tRNA(Asn) + L-glutamine + ATP + H2O = L-asparaginyl-tRNA(Asn) + L-glutamate + ADP + phosphate + 2 H(+). In terms of biological role, allows the formation of correctly charged Asn-tRNA(Asn) or Gln-tRNA(Gln) through the transamidation of misacylated Asp-tRNA(Asn) or Glu-tRNA(Gln) in organisms which lack either or both of asparaginyl-tRNA or glutaminyl-tRNA synthetases. The reaction takes place in the presence of glutamine and ATP through an activated phospho-Asp-tRNA(Asn) or phospho-Glu-tRNA(Gln). This is Aspartyl/glutamyl-tRNA(Asn/Gln) amidotransferase subunit C from Chromobacterium violaceum (strain ATCC 12472 / DSM 30191 / JCM 1249 / CCUG 213 / NBRC 12614 / NCIMB 9131 / NCTC 9757 / MK).